Reading from the N-terminus, the 217-residue chain is NADPH-dependent 3-demethoxyubiquinone 3-hydroxylase, mitochondrial (217 aa).

The transit peptide at 1 to 23 (MSAAGAIAAASVGRLRTGVRRPF) directs the protein to the mitochondrion. Tandem repeats lie at residues 48 to 129 (AVDR…TALL) and 130 to 217 (GKEG…SERF). The tract at residues 48–217 (AVDRIIRVDH…SAAIYLSERF (170 aa)) is 2 X approximate tandem repeats. An NADH-binding site is contributed by arginine 51. Fe cation is bound by residues glutamate 60, glutamate 90, histidine 93, glutamate 142, glutamate 178, and histidine 181. Positions 212 and 216 each coordinate NADH.

It belongs to the COQ7 family. As to quaternary structure, component of a multi-subunit COQ enzyme complex. Interacts with COQ8B and COQ6. Interacts with COQ9. Fe cation serves as cofactor. In terms of tissue distribution, highly expressed in tissues with high energy demand such as heart, muscle, liver, and kidney.

It is found in the mitochondrion inner membrane. It carries out the reaction a 5-methoxy-2-methyl-3-(all-trans-polyprenyl)benzoquinone + NADH + O2 = a 3-demethylubiquinone + NAD(+) + H2O. Its pathway is cofactor biosynthesis; ubiquinone biosynthesis. Its function is as follows. Catalyzes the hydroxylation of the 5-methoxy-2-methyl-3-(all-trans-polyprenyl)benzoquinone at the C6 position and participates in the biosynthesis of ubiquinone. Catalyzes the reaction through a substrate-mediated reduction pathway, whereby NADH shuttles electrons to 5-methoxy-2-methyl-3-(all-trans-decaprenyl)benzoquinone, which then transfers the electrons to the two Fe(3+) centers. The binding of 5-methoxy-2-methyl-3-(all-trans-polyprenyl)benzoquinone (DMQn) mediates reduction of the diiron center by nicotinamide adenine dinucleotide (NADH) and initiates oxygen activation for subsequent DMQ hydroxylation. The physiological substrates are 5-methoxy-2-methyl-3-(all-trans-nonaprenyl)benzoquinone (DMQ(9)) and 5-methoxy-2-methyl-3-(all-trans-decaprenyl)benzoquinone (DMQ(10)), however in vitro the enzyme does not have any specificity concerning the length of the polyprenyl tail, and accepts tails of various lengths with similar efficiency. Also has a structural role in the COQ enzyme complex, stabilizing other COQ polypeptides. Involved in lifespan determination in a ubiquinone-independent manner. Plays a role in modulating mitochondrial stress responses, acting in the nucleus, perhaps via regulating gene expression, independent of its characterized mitochondrial function in ubiquinone biosynthesis. The chain is NADPH-dependent 3-demethoxyubiquinone 3-hydroxylase, mitochondrial from Mus musculus (Mouse).